A 271-amino-acid polypeptide reads, in one-letter code: Glutamate racemase (271 aa).

Residues 10–11 and 42–43 each bind substrate; these read DS and YG. Catalysis depends on cysteine 74, which acts as the Proton donor/acceptor. 75–76 lines the substrate pocket; it reads NT. Cysteine 189 (proton donor/acceptor) is an active-site residue. Position 190–191 (190–191) interacts with substrate; it reads TH.

This sequence belongs to the aspartate/glutamate racemases family.

It carries out the reaction L-glutamate = D-glutamate. It participates in cell wall biogenesis; peptidoglycan biosynthesis. Provides the (R)-glutamate required for cell wall biosynthesis. The sequence is that of Glutamate racemase from Bartonella bacilliformis (strain ATCC 35685 / KC583 / Herrer 020/F12,63).